The chain runs to 247 residues: Sugar fermentation stimulation protein homolog (247 aa).

Belongs to the SfsA family.

This chain is Sugar fermentation stimulation protein homolog, found in Oleidesulfovibrio alaskensis (strain ATCC BAA-1058 / DSM 17464 / G20) (Desulfovibrio alaskensis).